Here is a 102-residue protein sequence, read N- to C-terminus: Small ribosomal subunit protein eS24 (102 aa).

Belongs to the eukaryotic ribosomal protein eS24 family.

The sequence is that of Small ribosomal subunit protein eS24 from Methanococcus maripaludis (strain C7 / ATCC BAA-1331).